Reading from the N-terminus, the 43-residue chain is Potassium channel toxin gamma-KTx 4.6 (43 aa).

Intrachain disulfides connect C5/C23, C11/C34, C20/C39, and C24/C41.

It belongs to the ergtoxin family. Gamma-KTx 4 subfamily. As to expression, expressed by the venom gland.

The protein resides in the secreted. Functionally, reversibly blocks Kv11/ERG potassium channels. This is Potassium channel toxin gamma-KTx 4.6 from Centruroides limpidus (Mexican scorpion).